The primary structure comprises 237 residues: N-alpha-acetyltransferase 40 (237 aa).

Gly2 is lipidated: N-myristoyl glycine. Positions 63–216 (TALSPDTVEW…EDCSYEILSR (154 aa)) constitute an N-acetyltransferase domain. Residues Tyr85, 127–129 (DVE), and Tyr138 each bind substrate. Acetyl-CoA contacts are provided by residues 140-142 (VQL) and 148-153 (RKGLGK). A substrate-binding site is contributed by Thr174. Residue Asn179 coordinates acetyl-CoA. Residue Tyr211 coordinates substrate.

It belongs to the acetyltransferase family. NAA40 subfamily.

It is found in the cytoplasm. The protein localises to the nucleus. The catalysed reaction is N-terminal L-seryl-[histone H4] + acetyl-CoA = N-terminal N(alpha)-acetyl-L-seryl-[histone H4] + CoA + H(+). The enzyme catalyses N-terminal L-seryl-[histone H2A] + acetyl-CoA = N-terminal N(alpha)-acetyl-L-seryl-[histone H2A] + CoA + H(+). Functionally, N-alpha-acetyltransferase that specifically mediates the acetylation of the N-terminal residues of histones H4 and H2A. In contrast to other N-alpha-acetyltransferase, has a very specific selectivity for histones H4 and H2A N-terminus and specifically recognizes the 'Ser-Gly-Arg-Gly sequence'. The sequence is that of N-alpha-acetyltransferase 40 (naa40) from Danio rerio (Zebrafish).